The chain runs to 646 residues: Long-chain fatty acid transport protein 1 (646 aa).

Topologically, residues Met-1–Ser-13 are extracellular. Residues Leu-14–Val-34 form a helical membrane-spanning segment. At Tyr-35 to Leu-646 the chain is on the cytoplasmic side. A sufficient for oligomerization region spans residues Glu-191–Lys-475. Tyr-246–Lys-257 contacts AMP.

Belongs to the ATP-dependent AMP-binding enzyme family. Self-associates. May function as a homodimer. Interacts with EPRS1; mediates the translocation of SLC27A1 from the cytoplasm to the plasma membrane thereby increasing the uptake of long-chain fatty acids. Interacts with DGAT2 and this interaction is enhanced in the presence of ZFYVE1. In terms of tissue distribution, expressed in muscle.

Its subcellular location is the cell membrane. It localises to the endomembrane system. The protein localises to the cytoplasm. It carries out the reaction a fatty acid(in) = a fatty acid(out). The enzyme catalyses (9Z)-octadecenoate(out) = (9Z)-octadecenoate(in). The catalysed reaction is hexadecanoate(out) = hexadecanoate(in). It catalyses the reaction (5Z,8Z,11Z,14Z)-eicosatetraenoate(out) = (5Z,8Z,11Z,14Z)-eicosatetraenoate(in). It carries out the reaction (9Z,12Z)-octadecadienoate(out) = (9Z,12Z)-octadecadienoate(in). The enzyme catalyses a long-chain fatty acid + ATP + CoA = a long-chain fatty acyl-CoA + AMP + diphosphate. The catalysed reaction is (5Z,8Z,11Z,14Z)-eicosatetraenoate + ATP + CoA = (5Z,8Z,11Z,14Z)-eicosatetraenoyl-CoA + AMP + diphosphate. It catalyses the reaction a very long-chain fatty acid + ATP + CoA = a very long-chain fatty acyl-CoA + AMP + diphosphate. It carries out the reaction tetracosanoate + ATP + CoA = tetracosanoyl-CoA + AMP + diphosphate. Inhibited by Triacsin C. Its function is as follows. Mediates the import of long-chain fatty acids (LCFA) into the cell by facilitating their transport at the plasma membrane. Also functions as an acyl-CoA ligase catalyzing the ATP-dependent formation of fatty acyl-CoA using LCFA and very-long-chain fatty acids (VLCFA) as substrates, which prevents fatty acid efflux from cells and might drive more fatty acid uptake. May act directly as a bona fide transporter, or alternatively, in a cytoplasmic or membrane-associated multimeric protein complex to trap and draw fatty acids towards accumulation. Plays a pivotal role in regulating available LCFA substrates from exogenous sources in tissues undergoing high levels of beta-oxidation or triglyceride synthesis. May be involved in regulation of cholesterol metabolism. Probably involved in fatty acid transport across the blood barrier. In Rattus norvegicus (Rat), this protein is Long-chain fatty acid transport protein 1.